The sequence spans 284 residues: Aldo-keto reductase MAV_3816 (284 aa).

Tyrosine 59 functions as the Proton donor in the catalytic mechanism. NADPH-binding residues include leucine 199, isoleucine 237, arginine 239, serine 240, alanine 241, serine 248, and arginine 275.

The protein belongs to the aldo/keto reductase family.

This is Aldo-keto reductase MAV_3816 from Mycobacterium avium (strain 104).